The following is a 517-amino-acid chain: Crotonobetaine/carnitine--CoA ligase (517 aa).

It belongs to the ATP-dependent AMP-binding enzyme family.

It carries out the reaction 4-(trimethylamino)butanoate + ATP + CoA = 4-(trimethylamino)butanoyl-CoA + AMP + diphosphate. It catalyses the reaction crotonobetaine + ATP + CoA = crotonobetainyl-CoA + AMP + diphosphate. The enzyme catalyses (R)-carnitine + ATP + CoA = (R)-carnitinyl-CoA + AMP + diphosphate. It functions in the pathway amine and polyamine metabolism; carnitine metabolism. In terms of biological role, catalyzes the transfer of CoA to carnitine, generating the initial carnitinyl-CoA needed for the CaiB reaction cycle. Also has activity toward crotonobetaine and gamma-butyrobetaine. This Salmonella choleraesuis (strain SC-B67) protein is Crotonobetaine/carnitine--CoA ligase.